Reading from the N-terminus, the 963-residue chain is Bifunctional glutamine synthetase adenylyltransferase/adenylyl-removing enzyme (963 aa).

Positions 1–453 (MLTTLIPLSQ…IFNEIIGEEE (453 aa)) are adenylyl removase. The interval 461–963 (VNEKLAEWKD…VREMWQRLLA (503 aa)) is adenylyl transferase.

It belongs to the GlnE family. Requires Mg(2+) as cofactor.

The catalysed reaction is [glutamine synthetase]-O(4)-(5'-adenylyl)-L-tyrosine + phosphate = [glutamine synthetase]-L-tyrosine + ADP. The enzyme catalyses [glutamine synthetase]-L-tyrosine + ATP = [glutamine synthetase]-O(4)-(5'-adenylyl)-L-tyrosine + diphosphate. Its function is as follows. Involved in the regulation of glutamine synthetase GlnA, a key enzyme in the process to assimilate ammonia. When cellular nitrogen levels are high, the C-terminal adenylyl transferase (AT) inactivates GlnA by covalent transfer of an adenylyl group from ATP to specific tyrosine residue of GlnA, thus reducing its activity. Conversely, when nitrogen levels are low, the N-terminal adenylyl removase (AR) activates GlnA by removing the adenylyl group by phosphorolysis, increasing its activity. The regulatory region of GlnE binds the signal transduction protein PII (GlnB) which indicates the nitrogen status of the cell. This Mannheimia haemolytica (Pasteurella haemolytica) protein is Bifunctional glutamine synthetase adenylyltransferase/adenylyl-removing enzyme.